Here is a 482-residue protein sequence, read N- to C-terminus: MKLNDSNLFRQQALINGEWLDANNGEAIDVTNPANGDKLGSVPKMGADETRAAIDAANRALPAWRALTAKERATILRNWFNLMMEHQDDLARLMTLEQGKPLAEAKGEISYAASFIEWFAEEGKRIYGDTIPGHQADKRLIVIKQPIGVTAAITPWNFPAAMITRKAGPALAAGCTMVLKPASQTPFSALALAELAIRAGVPAGVFNVVTGSAGAVGNELTSNPLVRKLSFTGSTEIGRQLMEQCAKDIKKVSLELGGNAPFIVFDDADLDKAVEGALASKFRNAGQTCVCANRLYVQDGVYDRFAEKLQQAVSKLHIGDGLDNGVTIGPLIDEKAVAKVEEHIADALEKGARVVCGGKAHERGGNFFQPTILVDVPANAKVSKEETFGPLAPLFRFKDEADVIAQANDTEFGLAAYFYARDLSRVFRVGEALEYGIVGINTGIISNEVAPFGGIKASGLGREGSKYGIEDYLEIKYMCIGL.

NADP(+) is bound by residues 156-157 (WN), 180-183 (KPAS), and 233-234 (GS). Glu255 (proton acceptor) is an active-site residue. Leu256 contacts NADP(+). Cys289 functions as the Nucleophile in the catalytic mechanism. Glu386 provides a ligand contact to NADP(+).

Belongs to the aldehyde dehydrogenase family. In terms of assembly, homotetramer.

The enzyme catalyses succinate semialdehyde + NADP(+) + H2O = succinate + NADPH + 2 H(+). It carries out the reaction 5-oxopentanoate + NADP(+) + H2O = glutarate + NADPH + 2 H(+). It participates in amino-acid degradation; 4-aminobutanoate degradation. It functions in the pathway amino-acid degradation. Its function is as follows. Catalyzes the NADP(+)-dependent oxidation of succinate semialdehyde to succinate. Thereby functions in a GABA degradation pathway that allows some E.coli strains to utilize GABA as a nitrogen source for growth. Also catalyzes the conversion of glutarate semialdehyde to glutarate, as part of a L-lysine degradation pathway that proceeds via cadaverine, glutarate and L-2-hydroxyglutarate. The chain is Succinate-semialdehyde dehydrogenase [NADP(+)] GabD (gabD) from Escherichia coli (strain K12).